Here is a 97-residue protein sequence, read N- to C-terminus: Co-chaperonin GroES (97 aa).

Belongs to the GroES chaperonin family. In terms of assembly, heptamer of 7 subunits arranged in a ring. Interacts with the chaperonin GroEL.

The protein resides in the cytoplasm. In terms of biological role, together with the chaperonin GroEL, plays an essential role in assisting protein folding. The GroEL-GroES system forms a nano-cage that allows encapsulation of the non-native substrate proteins and provides a physical environment optimized to promote and accelerate protein folding. GroES binds to the apical surface of the GroEL ring, thereby capping the opening of the GroEL channel. This is Co-chaperonin GroES from Yersinia enterocolitica.